Here is a 460-residue protein sequence, read N- to C-terminus: Inactive 7-epi-sesquithujene synthase (460 aa).

Aspartate 308 and aspartate 312 together coordinate Mg(2+). Residues aspartate 308 and aspartate 312 each coordinate substrate. Positions 308-312 (DDMFD) match the DDXXD motif motif.

Belongs to the terpene synthase family. Monomer. Mg(2+) is required as a cofactor. Requires Mn(2+) as cofactor.

It is found in the cytoplasm. It participates in secondary metabolite biosynthesis; terpenoid biosynthesis. Non-functional sesquiterpene synthase due to a frameshift removing part of the catalytic site. The protein is Inactive 7-epi-sesquithujene synthase of Zea mays (Maize).